We begin with the raw amino-acid sequence, 413 residues long: Elongation factor 1-alpha (413 aa).

Residues 5–211 (KEHMNLAFIG…DDLEAPEKPV (207 aa)) enclose the tr-type G domain. A G1 region spans residues 14–21 (GHVDHGKS). 14–21 (GHVDHGKS) is a GTP binding site. Residue Ser-21 participates in Mg(2+) binding. The tract at residues 60–64 (GVTID) is G2. Residues 81-84 (DCPG) are G3. Residues 81–85 (DCPGH) and 136–139 (NKMD) contribute to the GTP site. A G4 region spans residues 136–139 (NKMD). The G5 stretch occupies residues 175–177 (SAF).

It belongs to the TRAFAC class translation factor GTPase superfamily. Classic translation factor GTPase family. EF-Tu/EF-1A subfamily.

The protein resides in the cytoplasm. It carries out the reaction GTP + H2O = GDP + phosphate + H(+). Its function is as follows. GTP hydrolase that promotes the GTP-dependent binding of aminoacyl-tRNA to the A-site of ribosomes during protein biosynthesis. The polypeptide is Elongation factor 1-alpha (Methanothermobacter thermautotrophicus (strain ATCC 29096 / DSM 1053 / JCM 10044 / NBRC 100330 / Delta H) (Methanobacterium thermoautotrophicum)).